The chain runs to 88 residues: HssA/B-like protein 12 (88 aa).

This sequence belongs to the hssA/B family.

The sequence is that of HssA/B-like protein 12 (hssl12) from Dictyostelium discoideum (Social amoeba).